Consider the following 417-residue polypeptide: Serine--tRNA ligase (417 aa).

224–226 (TSE) contacts L-serine. Residues 255-257 (RRE) and Val271 each bind ATP. Glu278 is a binding site for L-serine. 342-345 (ELTS) is a binding site for ATP. An L-serine-binding site is contributed by Thr377.

This sequence belongs to the class-II aminoacyl-tRNA synthetase family. Type-1 seryl-tRNA synthetase subfamily. As to quaternary structure, homodimer. The tRNA molecule binds across the dimer.

The protein localises to the cytoplasm. It catalyses the reaction tRNA(Ser) + L-serine + ATP = L-seryl-tRNA(Ser) + AMP + diphosphate + H(+). The catalysed reaction is tRNA(Sec) + L-serine + ATP = L-seryl-tRNA(Sec) + AMP + diphosphate + H(+). It functions in the pathway aminoacyl-tRNA biosynthesis; selenocysteinyl-tRNA(Sec) biosynthesis; L-seryl-tRNA(Sec) from L-serine and tRNA(Sec): step 1/1. Functionally, catalyzes the attachment of serine to tRNA(Ser). Is also able to aminoacylate tRNA(Sec) with serine, to form the misacylated tRNA L-seryl-tRNA(Sec), which will be further converted into selenocysteinyl-tRNA(Sec). In Mycobacterium leprae (strain TN), this protein is Serine--tRNA ligase.